A 143-amino-acid chain; its full sequence is Crossover junction endodeoxyribonuclease Hjc (143 aa).

E11 provides a ligand contact to Mg(2+). The active site involves S31. D41 and E54 together coordinate Mg(2+).

The protein belongs to the Holliday junction resolvase Hjc family. As to quaternary structure, homodimer. It depends on Mg(2+) as a cofactor.

It catalyses the reaction Endonucleolytic cleavage at a junction such as a reciprocal single-stranded crossover between two homologous DNA duplexes (Holliday junction).. Functionally, a structure-specific endonuclease that resolves Holliday junction (HJ) intermediates during genetic recombination. Cleaves 4-way DNA junctions introducing paired nicks in opposing strands, leaving a 5'-terminal phosphate and a 3'-terminal hydroxyl group that are ligated to produce recombinant products. Redundant function with Holliday junction resolvase Hje. This is Crossover junction endodeoxyribonuclease Hjc from Sulfolobus acidocaldarius (strain ATCC 33909 / DSM 639 / JCM 8929 / NBRC 15157 / NCIMB 11770).